Reading from the N-terminus, the 290-residue chain is Membrane protein insertase YidC (290 aa).

The N-terminal stretch at 1–19 is a signal peptide; the sequence is MKKKALLPLFLGIMVFLAG. The N-palmitoyl cysteine moiety is linked to residue Cys20. The S-diacylglycerol cysteine moiety is linked to residue Cys20. The next 5 helical transmembrane spans lie at 56-76, 134-154, 176-196, 207-224, and 229-251; these read YGLAIIILVLVIRIILLPFML, MLGCLPMLIQLPIIMGLYFVL, PDIWITIIAGVLYFIQAYVSS, GYMMMVISPIMIIWISLS, and LGLYWSVSAAFLVVQTHFANIYY. The interval 270–290 is disordered; sequence HNGGSNKKGKNTQVVSKKKKK.

It belongs to the OXA1/ALB3/YidC family. Type 2 subfamily.

It localises to the cell membrane. Functionally, required for the insertion and/or proper folding and/or complex formation of integral membrane proteins into the membrane. Involved in integration of membrane proteins that insert both dependently and independently of the Sec translocase complex, as well as at least some lipoproteins. The sequence is that of Membrane protein insertase YidC from Staphylococcus aureus (strain Mu3 / ATCC 700698).